Here is a 251-residue protein sequence, read N- to C-terminus: 5'-nucleotidase SurE (251 aa).

A divalent metal cation-binding residues include aspartate 8, aspartate 9, serine 39, and asparagine 91.

This sequence belongs to the SurE nucleotidase family. Requires a divalent metal cation as cofactor.

The protein resides in the cytoplasm. The enzyme catalyses a ribonucleoside 5'-phosphate + H2O = a ribonucleoside + phosphate. Functionally, nucleotidase that shows phosphatase activity on nucleoside 5'-monophosphates. The polypeptide is 5'-nucleotidase SurE (Nitrosococcus oceani (strain ATCC 19707 / BCRC 17464 / JCM 30415 / NCIMB 11848 / C-107)).